Here is a 412-residue protein sequence, read N- to C-terminus: Putative competence-damage inducible protein (412 aa).

This sequence belongs to the CinA family.

The chain is Putative competence-damage inducible protein from Bacillus cereus (strain G9842).